A 349-amino-acid polypeptide reads, in one-letter code: UDP-N-acetylenolpyruvoylglucosamine reductase (349 aa).

Residues 26–197 (FDARARVAAR…VAVTFRLPKA (172 aa)) form the FAD-binding PCMH-type domain. Arginine 173 is an active-site residue. Serine 249 functions as the Proton donor in the catalytic mechanism. Glutamate 345 is an active-site residue.

It belongs to the MurB family. The cofactor is FAD.

The protein localises to the cytoplasm. It carries out the reaction UDP-N-acetyl-alpha-D-muramate + NADP(+) = UDP-N-acetyl-3-O-(1-carboxyvinyl)-alpha-D-glucosamine + NADPH + H(+). The protein operates within cell wall biogenesis; peptidoglycan biosynthesis. Its function is as follows. Cell wall formation. The chain is UDP-N-acetylenolpyruvoylglucosamine reductase from Burkholderia pseudomallei (strain K96243).